A 182-amino-acid polypeptide reads, in one-letter code: MTPTQNVPEDRIQIGQLRSAYGLNGWLWVYSNTEPMSNMFDYLPWFIETKAGWQTVDVKRWKPHGKGLVVSLKNVSDRNAAESLIGSTIWVAKSQLPKTDVDEYYWSDLKGLTVLGLDEEEQEVNLGQIHELFETGANDVMVVRATADSVDAEERMIPWHKDVVQRVDLEAGRIYVNWGVDY.

The PRC barrel domain occupies 101–182 (VDEYYWSDLK…RIYVNWGVDY (82 aa)).

Belongs to the RimM family. In terms of assembly, binds ribosomal protein uS19.

Its subcellular location is the cytoplasm. Functionally, an accessory protein needed during the final step in the assembly of 30S ribosomal subunit, possibly for assembly of the head region. Essential for efficient processing of 16S rRNA. May be needed both before and after RbfA during the maturation of 16S rRNA. It has affinity for free ribosomal 30S subunits but not for 70S ribosomes. The polypeptide is Ribosome maturation factor RimM (Acinetobacter baylyi (strain ATCC 33305 / BD413 / ADP1)).